Consider the following 107-residue polypeptide: UPF0145 protein ECA2666 (107 aa).

The protein belongs to the UPF0145 family.

This Pectobacterium atrosepticum (strain SCRI 1043 / ATCC BAA-672) (Erwinia carotovora subsp. atroseptica) protein is UPF0145 protein ECA2666.